Here is a 665-residue protein sequence, read N- to C-terminus: UvrABC system protein B (665 aa).

In terms of domain architecture, Helicase ATP-binding spans 25-412 (ASIEGGNRYQ…ENRIVEQVIR (388 aa)). 38–45 (GATGTGKT) contributes to the ATP binding site. The Beta-hairpin signature appears at 91–114 (YYDYYQPEAYIPVTDTYIEKTAAI). Residues 429-583 (QIDDLLGEIK…VAYNKLHGIT (155 aa)) form the Helicase C-terminal domain. The 36-residue stretch at 626–661 (PNLIDKLEAQMKEASKKLEFEEAAKLRDRIKQLRDK) folds into the UVR domain.

This sequence belongs to the UvrB family. Forms a heterotetramer with UvrA during the search for lesions. Interacts with UvrC in an incision complex.

Its subcellular location is the cytoplasm. Its function is as follows. The UvrABC repair system catalyzes the recognition and processing of DNA lesions. A damage recognition complex composed of 2 UvrA and 2 UvrB subunits scans DNA for abnormalities. Upon binding of the UvrA(2)B(2) complex to a putative damaged site, the DNA wraps around one UvrB monomer. DNA wrap is dependent on ATP binding by UvrB and probably causes local melting of the DNA helix, facilitating insertion of UvrB beta-hairpin between the DNA strands. Then UvrB probes one DNA strand for the presence of a lesion. If a lesion is found the UvrA subunits dissociate and the UvrB-DNA preincision complex is formed. This complex is subsequently bound by UvrC and the second UvrB is released. If no lesion is found, the DNA wraps around the other UvrB subunit that will check the other stand for damage. In Nostoc sp. (strain PCC 7120 / SAG 25.82 / UTEX 2576), this protein is UvrABC system protein B.